The following is a 339-amino-acid chain: Probable cytosolic iron-sulfur protein assembly protein CIAO1 (339 aa).

7 WD repeats span residues 14-53 (HPDS…WICK), 59-98 (GHQR…FECV), 103-142 (GHEN…EYEC), 148-187 (SHTQ…WVCC), 192-231 (GHES…NEQG), 250-289 (FHSR…DPQQ), and 301-339 (AHSQ…PEGL). Positions 176 to 178 (LYR) match the LYR motif; required for interaction with HSC20 motif.

The protein belongs to the WD repeat CIA1 family. In terms of assembly, component of the CIA complex. Interacts with CIAO2A and forms a complex with CIAO2B and MMS19; the interactions with CIAO2A and CIAO2B are mutually exclusive. Interacts with CHD1L, ERCC2, IREB2 and POLD1. Component of the MMXD complex, which includes CIAO1, ERCC2, CIAO2B, MMS19 and SLC25A5. Interacts with WT1. Interacts with CIAO3. Interacts (via LYR motif) with HSC20.

It is found in the cytoplasm. In terms of biological role, key component of the cytosolic iron-sulfur protein assembly (CIA) complex, a multiprotein complex that mediates the incorporation of iron-sulfur cluster into extramitochondrial Fe/S proteins. As a CIA complex component, interacts specifically with CIAO2A or CIAO2B and MMS19 to assist different branches of iron-sulfur protein assembly, depending of its interactors. The complex CIAO1:CIAO2B:MMS19 binds to and facilitates the assembly of most cytosolic-nuclear Fe/S proteins. CIAO1:CIAO2A specifically matures ACO1 and stabilizes IREB2. Seems to specifically modulate the transactivation activity of WT1. As part of the mitotic spindle-associated MMXD complex it may play a role in chromosome segregation. This Homo sapiens (Human) protein is Probable cytosolic iron-sulfur protein assembly protein CIAO1.